The primary structure comprises 517 residues: Histone H4 transcription factor (517 aa).

3 C2H2-type zinc fingers span residues 15–39, 129–153, and 169–193; these read LQCE…VTQH, FLCL…VEAH, and VLCG…LRSH. The C2H2-type 4; degenerate zinc finger occupies 199 to 221; the sequence is VACPTCGGMFANNTKFLDHIRRQ. 5 consecutive C2H2-type zinc fingers follow at residues 229 to 251, 255 to 278, 284 to 306, 312 to 337, and 345 to 368; these read FQCS…MRNH, YKCP…RFRH, FKCD…LDTH, YRCD…RKVH, and YKCH…RKKH. Positions 373–517 are interaction with NPAT; the sequence is PSGHPRFRYK…IAEEPEIQMV (145 aa). A required for activation of histone H4 transcription and contributes to DNA-binding region spans residues 374-407; the sequence is SGHPRFRYKEHEDGYMRLQLVRYESVELTQQLLR. The segment at 431–460 is disordered; that stretch reads TVPGEPGRKEEEEEGKGSEGTALSASQDNP. The segment covering 451 to 460 has biased composition (polar residues); the sequence is TALSASQDNP.

Binds MBD2 and a histone deacetylase complex. Interacts with NPAT. Post-translationally, ubiquitinated. Ubiquitination may lead to proteasome-mediated degradation. Ubiquitous. Highly expressed in brain, heart, skeletal muscle, spleen, kidney, small intestine, placenta and liver.

It is found in the nucleus. Its function is as follows. Transcriptional repressor that binds to the consensus sequence 5'-CGGACGTT-3' and to the RB1 promoter. Transcriptional activator that promotes histone H4 gene transcription at the G1/S phase transition in conjunction with NPAT. Also activates transcription of the ATM and PRKDC genes. Autoregulates its expression by associating with its own promoter. The sequence is that of Histone H4 transcription factor (HINFP) from Homo sapiens (Human).